Here is a 59-residue protein sequence, read N- to C-terminus: Large ribosomal subunit protein uL30 (59 aa).

The protein belongs to the universal ribosomal protein uL30 family. As to quaternary structure, part of the 50S ribosomal subunit.

The protein is Large ribosomal subunit protein uL30 of Leptospira interrogans serogroup Icterohaemorrhagiae serovar copenhageni (strain Fiocruz L1-130).